An 896-amino-acid polypeptide reads, in one-letter code: Desmocollin-3 (896 aa).

A signal peptide spans 1–31; the sequence is MVVPEFRSPQCRALCTKLLLTLWVFSFVGEA. The propeptide occupies 32–135; sequence CKKVTFHVPS…KETVLRRSKR (104 aa). 5 consecutive Cadherin domains span residues 136 to 243, 244 to 355, 356 to 472, 473 to 580, and 581 to 691; these read RWAP…YPLF, TEAI…APTF, RQNT…GPEC, KPPE…EIIQ, and DYIV…TLGK. Over 136–695 the chain is Extracellular; sequence RWAPIPCSMQ…GITLGKWAIL (560 aa). N-linked (GlcNAc...) asparagine glycosylation is present at Asn-166. N-linked (GlcNAc...) asparagine glycosylation is found at Asn-392 and Asn-547. An N-linked (GlcNAc...) (high mannose) asparagine glycan is attached at Asn-630. Residues 696-716 form a helical membrane-spanning segment; it reads AILLGIALLFSVLLTLVCGVV. Residues 717–896 lie on the Cytoplasmic side of the membrane; the sequence is TARKGKHFPE…LTLAETCTKR (180 aa).

As to quaternary structure, may form homodimers. Interacts with DSG1; there is evidence to suggest that the interaction promotes cell-cell adhesion of keratinocytes. Expressed in the basal layers of epidermal stratified epithelia from birth (at protein level).

The protein localises to the cell membrane. It is found in the cell junction. The protein resides in the desmosome. It localises to the cytoplasm. Its function is as follows. A component of desmosome cell-cell junctions which are required for positive regulation of cellular adhesion. Required for cell-cell adhesion in the epidermis, as a result required for the maintenance of the dermal cohesion and the dermal barrier function. Required for cell-cell adhesion of epithelial cell layers surrounding the telogen hair club, as a result plays an important role in telogen hair shaft anchorage. Essential for successful completion of embryo compaction and development beyond the 8-cell stage. The chain is Desmocollin-3 (Dsc3) from Mus musculus (Mouse).